A 634-amino-acid chain; its full sequence is Threonine--tRNA ligase (634 aa).

Residues 1-61 form the TGS domain; the sequence is MINIRFPDGS…NSNCELRLIT (61 aa). Residues 241 to 532 form a catalytic region; it reads DHRKIGKVLD…LIEHYAGNLP (292 aa). Zn(2+)-binding residues include Cys-332, His-383, and His-509.

Belongs to the class-II aminoacyl-tRNA synthetase family. In terms of assembly, homodimer. Requires Zn(2+) as cofactor.

The protein resides in the cytoplasm. The catalysed reaction is tRNA(Thr) + L-threonine + ATP = L-threonyl-tRNA(Thr) + AMP + diphosphate + H(+). Functionally, catalyzes the attachment of threonine to tRNA(Thr) in a two-step reaction: L-threonine is first activated by ATP to form Thr-AMP and then transferred to the acceptor end of tRNA(Thr). Also edits incorrectly charged L-seryl-tRNA(Thr). This is Threonine--tRNA ligase from Francisella tularensis subsp. novicida (strain U112).